A 188-amino-acid polypeptide reads, in one-letter code: Protein GrpE (188 aa).

The segment at 1–30 (MTKKTSHHKAEQKEKRAGEESGRESEVLDH) is disordered. The segment covering 8 to 30 (HKAEQKEKRAGEESGRESEVLDH) has biased composition (basic and acidic residues).

Belongs to the GrpE family. Homodimer.

Its subcellular location is the cytoplasm. Its function is as follows. Participates actively in the response to hyperosmotic and heat shock by preventing the aggregation of stress-denatured proteins, in association with DnaK and GrpE. It is the nucleotide exchange factor for DnaK and may function as a thermosensor. Unfolded proteins bind initially to DnaJ; upon interaction with the DnaJ-bound protein, DnaK hydrolyzes its bound ATP, resulting in the formation of a stable complex. GrpE releases ADP from DnaK; ATP binding to DnaK triggers the release of the substrate protein, thus completing the reaction cycle. Several rounds of ATP-dependent interactions between DnaJ, DnaK and GrpE are required for fully efficient folding. The sequence is that of Protein GrpE from Chlorobium phaeobacteroides (strain BS1).